Here is a 547-residue protein sequence, read N- to C-terminus: CTP synthase (547 aa).

Residues 1–265 (MARYIFITGG…DQAVLDAFDI (265 aa)) are amidoligase domain. Residue S13 participates in CTP binding. S13 is a UTP binding site. Residues 14-19 (SLGKGL) and D71 each bind ATP. Residues D71 and E139 each contribute to the Mg(2+) site. Residues 146–148 (DIE), 186–191 (KTKPTQ), and K222 contribute to the CTP site. UTP is bound by residues 186–191 (KTKPTQ) and K222. Residues 291-546 (KVAIVGKYTQ…IRAAKENSRL (256 aa)) form the Glutamine amidotransferase type-1 domain. G353 is an L-glutamine binding site. Catalysis depends on C380, which acts as the Nucleophile; for glutamine hydrolysis. Residues 381–384 (LGMQ), E404, and R474 each bind L-glutamine. Residues H519 and E521 contribute to the active site.

This sequence belongs to the CTP synthase family. In terms of assembly, homotetramer.

It catalyses the reaction UTP + L-glutamine + ATP + H2O = CTP + L-glutamate + ADP + phosphate + 2 H(+). It carries out the reaction L-glutamine + H2O = L-glutamate + NH4(+). The enzyme catalyses UTP + NH4(+) + ATP = CTP + ADP + phosphate + 2 H(+). It participates in pyrimidine metabolism; CTP biosynthesis via de novo pathway; CTP from UDP: step 2/2. With respect to regulation, allosterically activated by GTP, when glutamine is the substrate; GTP has no effect on the reaction when ammonia is the substrate. The allosteric effector GTP functions by stabilizing the protein conformation that binds the tetrahedral intermediate(s) formed during glutamine hydrolysis. Inhibited by the product CTP, via allosteric rather than competitive inhibition. Catalyzes the ATP-dependent amination of UTP to CTP with either L-glutamine or ammonia as the source of nitrogen. Regulates intracellular CTP levels through interactions with the four ribonucleotide triphosphates. The protein is CTP synthase of Roseobacter denitrificans (strain ATCC 33942 / OCh 114) (Erythrobacter sp. (strain OCh 114)).